The following is a 350-amino-acid chain: MIDTDRLIAAQPQGSEVHVDHAIRPRRLAEYIGQPRVREQLDIFISAARKRGDSLDHTLVFGPPGLGKTTLANIIAAEMDVDIKSTSGPVLERAGDLAAMLTNLQAGDVLFIDEIHRLPASVEEVLYPAMEDYQLDIMIGEGPAARSIKLDLPAFTLVGATTRAGLLTSPLRDRFGIVQRLEFYAVEELTEIVVRSAHLLGVDAERDGAAEIARRARGTPRIANRLLRRVRDFAEVRGDGRLTAAIADQALNMLHVDRHGLDHMDRRLLMAMIEKFDGGPVGVDSLAAAISEERDTIEDVLEPYLIQQGFMMRTARGRVVTRSAYEHFGLTPTDAVATAVPLTPPGESDA.

The segment at 4–184 (TDRLIAAQPQ…FGIVQRLEFY (181 aa)) is large ATPase domain (RuvB-L). Residues Ile23, Arg24, Gly65, Lys68, Thr69, Thr70, 131–133 (EDY), Arg174, Tyr184, and Arg221 contribute to the ATP site. Residue Thr69 coordinates Mg(2+). Residues 185–255 (AVEELTEIVV…IADQALNMLH (71 aa)) are small ATPAse domain (RuvB-S). The head domain (RuvB-H) stretch occupies residues 258–350 (RHGLDHMDRR…PLTPPGESDA (93 aa)). The DNA site is built by Arg294, Arg313, and Arg318.

Belongs to the RuvB family. In terms of assembly, homohexamer. Forms an RuvA(8)-RuvB(12)-Holliday junction (HJ) complex. HJ DNA is sandwiched between 2 RuvA tetramers; dsDNA enters through RuvA and exits via RuvB. An RuvB hexamer assembles on each DNA strand where it exits the tetramer. Each RuvB hexamer is contacted by two RuvA subunits (via domain III) on 2 adjacent RuvB subunits; this complex drives branch migration. In the full resolvosome a probable DNA-RuvA(4)-RuvB(12)-RuvC(2) complex forms which resolves the HJ.

It is found in the cytoplasm. It catalyses the reaction ATP + H2O = ADP + phosphate + H(+). The RuvA-RuvB-RuvC complex processes Holliday junction (HJ) DNA during genetic recombination and DNA repair, while the RuvA-RuvB complex plays an important role in the rescue of blocked DNA replication forks via replication fork reversal (RFR). RuvA specifically binds to HJ cruciform DNA, conferring on it an open structure. The RuvB hexamer acts as an ATP-dependent pump, pulling dsDNA into and through the RuvAB complex. RuvB forms 2 homohexamers on either side of HJ DNA bound by 1 or 2 RuvA tetramers; 4 subunits per hexamer contact DNA at a time. Coordinated motions by a converter formed by DNA-disengaged RuvB subunits stimulates ATP hydrolysis and nucleotide exchange. Immobilization of the converter enables RuvB to convert the ATP-contained energy into a lever motion, pulling 2 nucleotides of DNA out of the RuvA tetramer per ATP hydrolyzed, thus driving DNA branch migration. The RuvB motors rotate together with the DNA substrate, which together with the progressing nucleotide cycle form the mechanistic basis for DNA recombination by continuous HJ branch migration. Branch migration allows RuvC to scan DNA until it finds its consensus sequence, where it cleaves and resolves cruciform DNA. This Chromohalobacter salexigens (strain ATCC BAA-138 / DSM 3043 / CIP 106854 / NCIMB 13768 / 1H11) protein is Holliday junction branch migration complex subunit RuvB.